The primary structure comprises 502 residues: ATP synthase subunit alpha (502 aa).

The segment at 115–137 (VDGLGPVETTETRPIESPAPGVM) is disordered. 169–176 (GDRQTGKT) provides a ligand contact to ATP.

This sequence belongs to the ATPase alpha/beta chains family. In terms of assembly, F-type ATPases have 2 components, CF(1) - the catalytic core - and CF(0) - the membrane proton channel. CF(1) has five subunits: alpha(3), beta(3), gamma(1), delta(1), epsilon(1). CF(0) has three main subunits: a(1), b(2) and c(9-12). The alpha and beta chains form an alternating ring which encloses part of the gamma chain. CF(1) is attached to CF(0) by a central stalk formed by the gamma and epsilon chains, while a peripheral stalk is formed by the delta and b chains.

Its subcellular location is the cell membrane. It carries out the reaction ATP + H2O + 4 H(+)(in) = ADP + phosphate + 5 H(+)(out). Functionally, produces ATP from ADP in the presence of a proton gradient across the membrane. The alpha chain is a regulatory subunit. This is ATP synthase subunit alpha from Geobacillus kaustophilus (strain HTA426).